We begin with the raw amino-acid sequence, 165 residues long: Ribosome maturation factor RimM (165 aa).

The 73-residue stretch at 89-161 (EADTHYIVDL…KIVVKPVRQW (73 aa)) folds into the PRC barrel domain.

It belongs to the RimM family. Binds ribosomal protein uS19.

Its subcellular location is the cytoplasm. In terms of biological role, an accessory protein needed during the final step in the assembly of 30S ribosomal subunit, possibly for assembly of the head region. Essential for efficient processing of 16S rRNA. May be needed both before and after RbfA during the maturation of 16S rRNA. It has affinity for free ribosomal 30S subunits but not for 70S ribosomes. The chain is Ribosome maturation factor RimM from Clostridium botulinum (strain Alaska E43 / Type E3).